The sequence spans 555 residues: Glutamine--tRNA ligase (555 aa).

The 'HIGH' region motif lies at 34–44 (PEPNGYLHIGH). ATP-binding positions include 35–37 (EPN) and 41–47 (HIGHAKS). The L-glutamine site is built by D67 and Y212. ATP is bound by residues T231, 261 to 262 (RL), and 269 to 271 (MSK). Positions 268-272 (VMSKR) match the 'KMSKS' region motif. The tract at residues 317-324 (TKQDNTIE) is interaction with tRNA.

Belongs to the class-I aminoacyl-tRNA synthetase family. In terms of assembly, monomer.

It is found in the cytoplasm. It carries out the reaction tRNA(Gln) + L-glutamine + ATP = L-glutaminyl-tRNA(Gln) + AMP + diphosphate. This Citrobacter koseri (strain ATCC BAA-895 / CDC 4225-83 / SGSC4696) protein is Glutamine--tRNA ligase.